The sequence spans 355 residues: Protein RecA (355 aa).

67–74 (GPESSGKT) provides a ligand contact to ATP.

Belongs to the RecA family.

It is found in the cytoplasm. Can catalyze the hydrolysis of ATP in the presence of single-stranded DNA, the ATP-dependent uptake of single-stranded DNA by duplex DNA, and the ATP-dependent hybridization of homologous single-stranded DNAs. It interacts with LexA causing its activation and leading to its autocatalytic cleavage. In Shewanella baltica (strain OS223), this protein is Protein RecA.